The following is a 464-amino-acid chain: Protein FAM90A15 (464 aa).

3 disordered regions span residues 1-42, 70-389, and 415-437; these read MMAR…DPRL, PATL…HDGA, and HSPE…SEAP. Basic and acidic residues-rich tracts occupy residues 74–89 and 97–114; these read GKKE…KPRV and NKDK…DPQR. The segment covering 180 to 197 has biased composition (low complexity); sequence LASLSPLRKASLSSSSSL.

This sequence belongs to the FAM90 family.

The chain is Protein FAM90A15 from Homo sapiens (Human).